The chain runs to 557 residues: MAAAGGAALWRRLAAWLPRGPPGLAALLGRLSDRLSRGRDRRSRRSSWLLLAPLLTPPVPVITAMPCSLCPEGAHRFQWIRNLVPEFGISSSHVKVLSSPAEFYELLKVQIKTAKQRVVMASLYLGTGLLEQELVNCLEETLEKSLQANESPNLRVSILLDYTRGSRGRKNSRTMLIPLLQRFPEQVRVSLFHTPNLRGLLKLLIPERFNETIGLQHIKVYLFDDNVILSGANLSDLYFTNRQDRYVLLQDSPEIADFFTELVDAIGDVSLQLQQDDTVQMMEGMVHPYQGDKVRYCEIANQRVMEVIDSARTRQELLHAKTFHSSQQGSSMLPQHDSEASEGLKPEPDTWIYPLIQMKPFGIQIDEMVTETLLTEAERDAKIYLTTGYFNLTQAYMDLILGTRAEYRILLASPEVNGFFGAKGVAGAIPSAYVYIEHQFYNEVCCLHQQERVQLQEYSRAGWTFHAKGLWLYLAGSSLPCLTLIGSPNFGYRSVHRDLEAQVAIVTENKALQQQLHQEQEQLYLCSGVVSSSTFEQPSRHVKLWVKLVTPLIKNFF.

The transit peptide at 1–25 directs the protein to the mitochondrion; that stretch reads MAAAGGAALWRRLAAWLPRGPPGLA. 121 to 128 contacts ATP; sequence ASLYLGTG. One can recognise a PLD phosphodiesterase 1 domain in the interval 212–238; that stretch reads TIGLQHIKVYLFDDNVILSGANLSDLY. Catalysis depends on residues His217, Lys219, and Asp224. Residues 322–346 are disordered; sequence TFHSSQQGSSMLPQHDSEASEGLKP. Over residues 323 to 333 the composition is skewed to polar residues; the sequence is FHSSQQGSSML. Basic and acidic residues predominate over residues 336-346; that stretch reads HDSEASEGLKP. The PLD phosphodiesterase 2 domain occupies 461 to 494; that stretch reads AGWTFHAKGLWLYLAGSSLPCLTLIGSPNFGYRS.

This sequence belongs to the CDP-alcohol phosphatidyltransferase class-II family.

It localises to the mitochondrion. The catalysed reaction is a CDP-1,2-diacyl-sn-glycerol + sn-glycerol 3-phosphate = a 1,2-diacyl-sn-glycero-3-phospho-(1'-sn-glycero-3'-phosphate) + CMP + H(+). It participates in phospholipid metabolism; phosphatidylglycerol biosynthesis; phosphatidylglycerol from CDP-diacylglycerol: step 1/2. Its activity is regulated as follows. Activated by calcium and magnesium and inhibited by other bivalent cations. Functions in the biosynthesis of the anionic phospholipids phosphatidylglycerol and cardiolipin. The sequence is that of CDP-diacylglycerol--glycerol-3-phosphate 3-phosphatidyltransferase, mitochondrial (PGS1) from Gallus gallus (Chicken).